The sequence spans 179 residues: Inosine/xanthosine triphosphatase (179 aa).

Glu-71 is a binding site for Mg(2+). 71 to 72 contributes to the substrate binding site; sequence EA.

This sequence belongs to the YjjX NTPase family. In terms of assembly, homodimer. Mg(2+) is required as a cofactor. Mn(2+) serves as cofactor.

The enzyme catalyses XTP + H2O = XDP + phosphate + H(+). It carries out the reaction ITP + H2O = IDP + phosphate + H(+). Its function is as follows. Phosphatase that hydrolyzes non-canonical purine nucleotides such as XTP and ITP to their respective diphosphate derivatives. Probably excludes non-canonical purines from DNA/RNA precursor pool, thus preventing their incorporation into DNA/RNA and avoiding chromosomal lesions. This is Inosine/xanthosine triphosphatase from Shewanella sp. (strain ANA-3).